We begin with the raw amino-acid sequence, 118 residues long: uncharacterized protein (118 aa).

The tract at residues 1–118 (MASARGAKQS…AARQNEKTAR (118 aa)) is disordered. Residues 13–28 (RVGTTRYTETSTVRVE) show a composition bias toward low complexity. A compositionally biased stretch (basic and acidic residues) spans 29 to 49 (TSSHRVETSSRRVETSQRRSE).

This is an uncharacterized protein from Homo sapiens (Human).